The primary structure comprises 345 residues: MSVTHGKMGLSLTQEILSHLGLANKTAAWGTLGTLRTFLSFSADKDVQRLLKAIAGQGVDRIAILDVLTNRSREQRQLISRAFHERTQQDLLKSLQAALSGNLERIVVALLQPAAHLDARELRTALKGSGSAEDVALEILATRTPPQLQECLAVYKHNFQVDAAEDIKSETRGILRDLLLALAKGGREAYTGIIDYNLAAQDVQALKQAEGPSTERTWVLVFTQRNPEHLVRVLNQYQWYTGHGLEKTVRARFHGAACVALLNLASVIRNTPLYFADKLHQALQETEPNYQALMRILISRSETDLLSIRAEFRKKFGKSLYSSLQDAVKGDCRSALLALCRAEDL.

Annexin repeat units lie at residues 41–112 (FSAD…ALLQ), 113–184 (PAAH…ALAK), 197–266 (NLAA…NLAS), and 270–341 (NTPL…ALCR).

This sequence belongs to the annexin family. As to quaternary structure, homodimer.

In terms of biological role, may act as a low affinity receptor for acetylcholine. The protein is Annexin A9 (ANXA9) of Bos taurus (Bovine).